The following is a 311-amino-acid chain: N-acetylmuramic acid 6-phosphate etherase (311 aa).

Residues 64–227 (IYQRLIDNGR…SSGVMIKLGK (164 aa)) form the SIS domain. Glu-92 serves as the catalytic Proton donor. Glu-123 is a catalytic residue.

It belongs to the GCKR-like family. MurNAc-6-P etherase subfamily. Homodimer.

It catalyses the reaction N-acetyl-D-muramate 6-phosphate + H2O = N-acetyl-D-glucosamine 6-phosphate + (R)-lactate. It participates in amino-sugar metabolism; N-acetylmuramate degradation. In terms of biological role, specifically catalyzes the cleavage of the D-lactyl ether substituent of MurNAc 6-phosphate, producing GlcNAc 6-phosphate and D-lactate. The polypeptide is N-acetylmuramic acid 6-phosphate etherase (Prochlorococcus marinus (strain SARG / CCMP1375 / SS120)).